A 258-amino-acid chain; its full sequence is MSKISEVFKNSKALITYVTAGDPNLEVTKEIILELNKDGVDIIEVGIPFSDPLADGPIIQKASQKALKNGVTLKKIFETLNEIKEEVTCPLVLMGYYNSILNYGIDNFITEAVNTGISGVIIPDLPFDEEEEFYAKIKENGIDPILLVAPNTSEERLKEISKVCSGFLYCVSIMGVTGDSQAPMEHLKEYSQRVRKYVNIPLAIGFGIDSPTKAKNIIEYFDGIIVGSALIKIIDENSDDKGKLLKEIKRFTKSLKVW.

Catalysis depends on proton acceptor residues Glu44 and Asp55.

The protein belongs to the TrpA family. As to quaternary structure, tetramer of two alpha and two beta chains.

The catalysed reaction is (1S,2R)-1-C-(indol-3-yl)glycerol 3-phosphate + L-serine = D-glyceraldehyde 3-phosphate + L-tryptophan + H2O. It functions in the pathway amino-acid biosynthesis; L-tryptophan biosynthesis; L-tryptophan from chorismate: step 5/5. In terms of biological role, the alpha subunit is responsible for the aldol cleavage of indoleglycerol phosphate to indole and glyceraldehyde 3-phosphate. The sequence is that of Tryptophan synthase alpha chain from Petrotoga mobilis (strain DSM 10674 / SJ95).